A 169-amino-acid polypeptide reads, in one-letter code: Cell division inhibitor SulA (169 aa).

A compositionally biased stretch (polar residues) spans 1–16; it reads MFTSAHANRSPLTSAS. The segment at 1–20 is disordered; the sequence is MFTSAHANRSPLTSASVRRP. The ftsZ binding stretch occupies residues 106 to 112; sequence ALRTGNY. The segment at 162 to 169 is lon protease binding; sequence KIHSNLYH.

This sequence belongs to the SulA family. In terms of assembly, interacts with FtsZ. In terms of processing, is rapidly cleaved and degraded by the Lon protease once DNA damage is repaired.

Component of the SOS system and an inhibitor of cell division. Accumulation of SulA causes rapid cessation of cell division and the appearance of long, non-septate filaments. In the presence of GTP, binds a polymerization-competent form of FtsZ in a 1:1 ratio, thus inhibiting FtsZ polymerization and therefore preventing it from participating in the assembly of the Z ring. This mechanism prevents the premature segregation of damaged DNA to daughter cells during cell division. This is Cell division inhibitor SulA from Klebsiella aerogenes (Enterobacter aerogenes).